The chain runs to 519 residues: bZIP transcription factor 30 (519 aa).

5 disordered regions span residues 1 to 30 (MGGGGDTTDTNMMQRVNSSSGTSSSSIPKH), 45 to 83 (FRHPFTGAPPPPIPPISPYSQIPATLQPRHSRSMSQPSS), 108 to 202 (TGAG…RKPE), 222 to 295 (VLNS…TGRH), and 315 to 339 (SSLKLPPSSSAKVSPTNSGEGNSSA). Residues 51–61 (GAPPPPIPPIS) show a composition bias toward pro residues. Over residues 149-173 (SDVTFGFSSMMSQNQKSPPLSSLER) the composition is skewed to polar residues. Basic and acidic residues predominate over residues 187-202 (VKKEPREGFYKGRKPE). 2 stretches are compositionally biased toward low complexity: residues 244-268 (SRGSGTKKTNGGSSSDSEGDSSASG) and 317-329 (LKLPPSSSAKVSP). Polar residues predominate over residues 330-339 (TNSGEGNSSA). Residues 372–393 (KRVKRILANRVSAARSKERKTR) are basic motif. The stretch at 386–460 (RSKERKTRYM…SEKLNEEVQR (75 aa)) forms a coiled coil. The tract at residues 398-433 (LEHKVQTLQTEATTLSAQLTHLQRDSMGLTNQNSEL) is leucine-zipper. Residues 465–519 (IGEPNRRQSGSSSSESKMSLNPEMFQQLSISQLQHQQMQHSNQCSTMKAKHTSND) form a disordered region. Composition is skewed to low complexity over residues 473–483 (SGSSSSESKMS) and 490–509 (QQLSISQLQHQQMQHSNQCS).

Interacts with WUS, HEC1, KNAT1, KNAT2, HAT1, BEL1, and NGA1. Expressed in inflorescence meristem, floral organ primordia, gynoecia, ovules and carpel margin meristem.

Its subcellular location is the nucleus. Its function is as follows. Transcription factor that acts as a repressor of reproductive development, meristem size and plant growth. Acts as a transcriptional repressor in inflorescence tissues. Interacts with well known regulators of meristem and gynoecium development such as WUS, HEC1, KNAT1, KNAT2, HAT1, BEL1 and NGA1. Acts as a positive regulator of JAG and OFP1 expression in developing gynoecia. The chain is bZIP transcription factor 30 from Arabidopsis thaliana (Mouse-ear cress).